Here is a 153-residue protein sequence, read N- to C-terminus: uncharacterized protein (153 aa).

Transmembrane regions (helical) follow at residues 16–36 (ILACLLLIFLMATIFLLILEI) and 97–117 (ALTTTLSIILLVCIIMACIIC).

The protein resides in the membrane. This is an uncharacterized protein from Human herpesvirus 6A (strain Uganda-1102) (HHV-6 variant A).